We begin with the raw amino-acid sequence, 288 residues long: 4-hydroxy-tetrahydrodipicolinate synthase (288 aa).

Residue threonine 42 coordinates pyruvate. Catalysis depends on tyrosine 129, which acts as the Proton donor/acceptor. Lysine 157 (schiff-base intermediate with substrate) is an active-site residue. Position 198 (isoleucine 198) interacts with pyruvate.

The protein belongs to the DapA family. In terms of assembly, homotetramer; dimer of dimers.

It localises to the cytoplasm. It carries out the reaction L-aspartate 4-semialdehyde + pyruvate = (2S,4S)-4-hydroxy-2,3,4,5-tetrahydrodipicolinate + H2O + H(+). It participates in amino-acid biosynthesis; L-lysine biosynthesis via DAP pathway; (S)-tetrahydrodipicolinate from L-aspartate: step 3/4. In terms of biological role, catalyzes the condensation of (S)-aspartate-beta-semialdehyde [(S)-ASA] and pyruvate to 4-hydroxy-tetrahydrodipicolinate (HTPA). This is 4-hydroxy-tetrahydrodipicolinate synthase from Chlamydia abortus (strain DSM 27085 / S26/3) (Chlamydophila abortus).